The chain runs to 134 residues: Small ribosomal subunit protein uS11 (134 aa).

It belongs to the universal ribosomal protein uS11 family. Part of the 30S ribosomal subunit. Interacts with proteins S7 and S18. Binds to IF-3.

Functionally, located on the platform of the 30S subunit, it bridges several disparate RNA helices of the 16S rRNA. Forms part of the Shine-Dalgarno cleft in the 70S ribosome. This chain is Small ribosomal subunit protein uS11, found in Leptothrix cholodnii (strain ATCC 51168 / LMG 8142 / SP-6) (Leptothrix discophora (strain SP-6)).